Here is a 602-residue protein sequence, read N- to C-terminus: Threonine--tRNA ligase (602 aa).

The catalytic stretch occupies residues 208–499; that stretch reads DHRKLGTELK…LTEHCAGEFP (292 aa). The Zn(2+) site is built by Cys-300, His-351, and His-476.

This sequence belongs to the class-II aminoacyl-tRNA synthetase family. In terms of assembly, homodimer. It depends on Zn(2+) as a cofactor.

The protein resides in the cytoplasm. It carries out the reaction tRNA(Thr) + L-threonine + ATP = L-threonyl-tRNA(Thr) + AMP + diphosphate + H(+). Its function is as follows. Catalyzes the attachment of threonine to tRNA(Thr) in a two-step reaction: L-threonine is first activated by ATP to form Thr-AMP and then transferred to the acceptor end of tRNA(Thr). Also edits incorrectly charged L-seryl-tRNA(Thr). The sequence is that of Threonine--tRNA ligase from Campylobacter jejuni subsp. jejuni serotype O:6 (strain 81116 / NCTC 11828).